The chain runs to 135 residues: Membrane-anchored ubiquitin-fold protein 4 (135 aa).

The interval 1–20 (MAEKEEGKVAAEGGAEAEAD) is disordered. The Ubiquitin-like domain occupies 23 to 92 (VEVKFRLFDG…NDKNIAQCRA (70 aa)). A Cysteine methyl ester modification is found at Cys-132. Residue Cys-132 is the site of S-geranylgeranyl cysteine attachment. Residues 133 to 135 (TIL) constitute a propeptide, removed in mature form.

It is found in the cell membrane. Functionally, may serve as docking site to facilitate the association of other proteins to the plasma membrane. This is Membrane-anchored ubiquitin-fold protein 4 (MUB4) from Oryza sativa subsp. japonica (Rice).